A 376-amino-acid polypeptide reads, in one-letter code: Homeobox protein extradenticle (376 aa).

Positions 1–37 are disordered; the sequence is MEDPNRMLAHTGGMMAPQGYGLSGQDDGQNAGSENEV. In terms of domain architecture, PBC spans 38–237; sequence RKQKDIGEIL…VMILRSRFLD (200 aa). Residues 45 to 124 are PBC-A; it reads EILQQIMSIS…EGVAGPEKGG (80 aa). Residues 127–237 are PBC-B; sequence AAAASAAAAS…VMILRSRFLD (111 aa). The segment at residues 238-300 is a DNA-binding region (homeobox; TALE-type); it reads ARRKRRNFSK…NKRIRYKKNI (63 aa). The span at 318-335 shows a compositional bias: low complexity; sequence ASPYSMAGPPSGTTTPMM. The interval 318–376 is disordered; sequence ASPYSMAGPPSGTTTPMMSPAPPQDSMGYPMGSGGYDQQQPYDNSMGGYDPNLHQDLSP.

This sequence belongs to the TALE/PBX homeobox family. In terms of assembly, interacts with Ubx and hth. As to expression, prior to full germband retraction it is ubiquitously present, after germband retraction, mostly present in the anterior portion of the ventral nerve cord.

It localises to the nucleus. Transcription factor which acts with the selector homeodomain proteins altering the regulation of downstream target genes such as wingless (wg), teashirt (tsh) and decapentaplegic (dpp), thus affecting segmental identity. Delimits the eye field and prevent inappropriate eye development. Required for proper localization of chordotonal organs within the peripheral nervous system. The sequence is that of Homeobox protein extradenticle (exd) from Drosophila melanogaster (Fruit fly).